Consider the following 225-residue polypeptide: UPF0758 protein Mhun_2739 (225 aa).

Residues 102 to 225 (RITEPDHILK…VTSLRSLGYL (124 aa)) form the MPN domain. Residues His174, His176, and Asp187 each coordinate Zn(2+). The JAMM motif motif lies at 174 to 187 (HNHPSGNPEPSSED).

It belongs to the UPF0758 family.

The polypeptide is UPF0758 protein Mhun_2739 (Methanospirillum hungatei JF-1 (strain ATCC 27890 / DSM 864 / NBRC 100397 / JF-1)).